Reading from the N-terminus, the 683-residue chain is Methionine--tRNA ligase (683 aa).

A 'HIGH' region motif is present at residues Tyr15 to Asn25. The short motif at Lys311 to Ser315 is the 'KMSKS' region element. Residue Lys314 participates in ATP binding. In terms of domain architecture, tRNA-binding spans Asp581–Ser683.

It belongs to the class-I aminoacyl-tRNA synthetase family. MetG type 2B subfamily. In terms of assembly, homodimer.

The protein localises to the cytoplasm. It catalyses the reaction tRNA(Met) + L-methionine + ATP = L-methionyl-tRNA(Met) + AMP + diphosphate. Its function is as follows. Is required not only for elongation of protein synthesis but also for the initiation of all mRNA translation through initiator tRNA(fMet) aminoacylation. This Lactiplantibacillus plantarum (strain ATCC BAA-793 / NCIMB 8826 / WCFS1) (Lactobacillus plantarum) protein is Methionine--tRNA ligase.